The primary structure comprises 47 residues: Large ribosomal subunit protein eL40 (47 aa).

The protein belongs to the eukaryotic ribosomal protein eL40 family.

The polypeptide is Large ribosomal subunit protein eL40 (Methanococcus aeolicus (strain ATCC BAA-1280 / DSM 17508 / OCM 812 / Nankai-3)).